A 167-amino-acid polypeptide reads, in one-letter code: Adenylylsulfate reductase subunit beta (167 aa).

2 4Fe-4S ferredoxin-type domains span residues 1–35 (MPTF…LDPE) and 38–67 (KAFN…ARPY). [4Fe-4S] cluster is bound by residues Cys10, Cys13, Cys21, Cys25, Cys47, Cys50, Cys53, and Cys57.

As to quaternary structure, heterodimer composed of AprA and AprB. The heterodimers can dimerize to form heterotetramers. [4Fe-4S] cluster serves as cofactor.

The protein localises to the cytoplasm. Functionally, iron-sulfur cluster subunit of the adenylylsulfate reductase which catalyzes reversibly the reduction of adenosine 5'-phosphosulfate (APS) to sulfite and AMP during dissimilatory sulfate reduction. The iron-sulfur cluster 2 is thought to accept electrons from a still unknown electron donor and transfer electrons to the iron-sulfur cluster 1 of this protein and then onto the FAD of AprA. This is Adenylylsulfate reductase subunit beta from Megalodesulfovibrio gigas (strain ATCC 19364 / DSM 1382 / NCIMB 9332 / VKM B-1759) (Desulfovibrio gigas).